The chain runs to 1349 residues: Zinc finger protein 804B (1349 aa).

The segment at 55–79 (FYCELCDKQYHKHQEFDNHINSYDH) adopts a C2H2-type zinc-finger fold. The segment at 985–1010 (YASESRNDQDSAIPRTTEKDKSKSSH) is disordered.

The chain is Zinc finger protein 804B (ZNF804B) from Homo sapiens (Human).